The chain runs to 138 residues: Putative pre-16S rRNA nuclease (138 aa).

It belongs to the YqgF nuclease family.

The protein localises to the cytoplasm. Could be a nuclease involved in processing of the 5'-end of pre-16S rRNA. In Bacillus pumilus (strain SAFR-032), this protein is Putative pre-16S rRNA nuclease.